An 88-amino-acid chain; its full sequence is Probable glutaredoxin ssr2061 (88 aa).

An intrachain disulfide couples Cys15 to Cys18.

Belongs to the glutaredoxin family.

Functionally, has a glutathione-disulfide oxidoreductase activity in the presence of NADPH and glutathione reductase. Reduces low molecular weight disulfides and proteins. This chain is Probable glutaredoxin ssr2061, found in Synechocystis sp. (strain ATCC 27184 / PCC 6803 / Kazusa).